We begin with the raw amino-acid sequence, 304 residues long: Ferredoxin fas2 (304 aa).

Positions 2-29 (KVVVNERRCFGSGQCVLVAPEVFEQSND) constitute a 4Fe-4S ferredoxin-type domain. Positions 10, 16, and 54 each coordinate [3Fe-4S] cluster. A transketolase-like region spans residues 66-304 (MRQEPTEFSY…QSARSSIQQR (239 aa)).

This sequence in the C-terminal section; belongs to the transketolase family. Requires [3Fe-4S] cluster as cofactor.

In terms of biological role, plays a role in electron transfer. The fas operon encodes genes involved in cytokinin production and in host plant fasciation (leafy gall). This chain is Ferredoxin fas2 (fas2), found in Rhodococcoides fascians (Rhodococcus fascians).